A 352-amino-acid polypeptide reads, in one-letter code: Secretion system apparatus protein SsaU (352 aa).

The next 4 helical transmembrane spans lie at 34 to 54 (LIAL…ILIE), 89 to 109 (LGAG…GVVI), 144 to 164 (LKVI…ASTF), and 176 to 196 (VLVV…FYIV).

It belongs to the type III secretion exporter family.

The protein localises to the cell membrane. In terms of biological role, part of a type III secretion system. The chain is Secretion system apparatus protein SsaU (ssaU) from Salmonella typhimurium (strain LT2 / SGSC1412 / ATCC 700720).